A 570-amino-acid polypeptide reads, in one-letter code: Capsid vertex component 2 (570 aa).

The tract at residues 1 to 54 (MALSGHVLIDPARLPRDTGPELMWAPSLRNSLRVSPEALELAEREAERARSERW) is interaction with major capsid protein/MCP. The tract at residues 102 to 123 (QVRSPSTGGRSAPAPPSPSPAQ) is disordered.

The protein belongs to the herpesviridae CVC2 protein family. In terms of assembly, heterodimerizes with CVC1. Interacts with major capsid protein/MCP and triplex capsid protein 1/TRX1 at the pentamer vertices. Interacts with the large tegument protein/LTP.

The protein resides in the virion. It localises to the host nucleus. In terms of biological role, capsid vertex-specific component that plays a role during viral DNA encapsidation, assuring correct genome cleavage and presumably stabilizing capsids that contain full-length viral genomes. Participates in the interaction between the capsid and the tegument through interaction with the large tegument protein/LTP. The chain is Capsid vertex component 2 from Homo sapiens (Human).